A 198-amino-acid polypeptide reads, in one-letter code: Putative coiled-coil domain-containing protein 196 (198 aa).

Positions 24-117 (NYLKELNEDL…RKEMEMLWNK (94 aa)) form a coiled coil. Basic and acidic residues-rich tracts occupy residues 135–144 (NKTDLQDGKA) and 154–167 (TKNELETLCAEKGK). The tract at residues 135–198 (NKTDLQDGKA…VSGTSQHHSE (64 aa)) is disordered. Polar residues predominate over residues 187 to 198 (GQVSGTSQHHSE).

This is Putative coiled-coil domain-containing protein 196 from Bos taurus (Bovine).